Here is a 297-residue protein sequence, read N- to C-terminus: Probable endonuclease 4 (297 aa).

9 residues coordinate Zn(2+): H69, H110, E145, D179, H182, H214, D227, H229, and E259.

It belongs to the AP endonuclease 2 family. Requires Zn(2+) as cofactor.

It carries out the reaction Endonucleolytic cleavage to 5'-phosphooligonucleotide end-products.. Functionally, endonuclease IV plays a role in DNA repair. It cleaves phosphodiester bonds at apurinic or apyrimidinic (AP) sites, generating a 3'-hydroxyl group and a 5'-terminal sugar phosphate. This Listeria welshimeri serovar 6b (strain ATCC 35897 / DSM 20650 / CCUG 15529 / CIP 8149 / NCTC 11857 / SLCC 5334 / V8) protein is Probable endonuclease 4.